Consider the following 496-residue polypeptide: Cytochrome P450 71D95 (496 aa).

Residues 2 to 22 (ELQISSAIIILVATFVASLLI) traverse the membrane as a helical; Signal-anchor segment. Cysteine 436 is a binding site for heme.

It belongs to the cytochrome P450 family. Requires heme as cofactor.

The protein localises to the endoplasmic reticulum membrane. The catalysed reaction is (4S)-limonene + reduced [NADPH--hemoprotein reductase] + O2 = (1S,6R)-isopiperitenol + oxidized [NADPH--hemoprotein reductase] + H2O + H(+). Its function is as follows. Hydroxylates both (+)- and (-)-limonene to (+) and (-)-trans-isopiperitenol. The chain is Cytochrome P450 71D95 (CYP71D95) from Mentha spicata (Spearmint).